The primary structure comprises 578 residues: GPI-anchor transamidase component PIGT (578 aa).

The first 21 residues, 1–21 (MAAAMPLALLVLLLLGPGGWC), serve as a signal peptide directing secretion. Over 22–525 (LAEPPRDSLR…NLPTPDFSMP (504 aa)) the chain is Lumenal. Residue Asn164 is glycosylated (N-linked (GlcNAc...) asparagine). 2 disulfides stabilise this stretch: Cys195-Cys272 and Cys226-Cys231. Residues Asn291 and Asn327 are each glycosylated (N-linked (GlcNAc...) asparagine). 4 residues coordinate a 2-acyl-6-[6-phosphoethanolamine-alpha-D-mannosyl-(1-&gt;2)-6-phosphoethanolamine-alpha-D-mannosyl-(1-&gt;6)-2-phosphoethanolamine-alpha-D-mannosyl-(1-&gt;4)-alpha-D-glucosaminyl]-1-(1-radyl,2-acyl-sn-glycero-3-phospho)-1D-myo-inositol: Asn461, Asp521, Ser523, and Asn527. Residues 526 to 548 (YNVICLTCTVVAVCYGSFYNLLT) form a helical membrane-spanning segment. At 549–578 (RTFHIEEPRTGGLAKRLANLIRRARGVPPL) the chain is on the cytoplasmic side.

This sequence belongs to the PIGT family. As to quaternary structure, heteropentamer. Part of the GPI-anchor transamidase complex, consisting of PIGK, PIGT, PIGS, PIGU and GAA1. In terms of processing, the disulfide bond between PIGK/GPI8 and PIGT is important for normal enzyme activity.

The protein resides in the endoplasmic reticulum membrane. It functions in the pathway glycolipid biosynthesis; glycosylphosphatidylinositol-anchor biosynthesis. Its function is as follows. Component of the glycosylphosphatidylinositol-anchor (GPI-anchor) transamidase (GPI-T) complex that catalyzes the formation of the linkage between a proprotein and a GPI-anchor and participates in GPI anchored protein biosynthesis. May play a crucial role in GPI-T complex assembly in the luminal layer. Binds GPI-anchor. In Homo sapiens (Human), this protein is GPI-anchor transamidase component PIGT.